Reading from the N-terminus, the 109-residue chain is uncharacterized protein (109 aa).

Helical transmembrane passes span threonine 18 to leucine 38 and alanine 48 to leucine 68.

Its subcellular location is the cell membrane. This is an uncharacterized protein from Mycobacterium tuberculosis (strain CDC 1551 / Oshkosh).